We begin with the raw amino-acid sequence, 459 residues long: Exodeoxyribonuclease 7 large subunit (459 aa).

It belongs to the XseA family. Heterooligomer composed of large and small subunits.

It is found in the cytoplasm. It catalyses the reaction Exonucleolytic cleavage in either 5'- to 3'- or 3'- to 5'-direction to yield nucleoside 5'-phosphates.. Functionally, bidirectionally degrades single-stranded DNA into large acid-insoluble oligonucleotides, which are then degraded further into small acid-soluble oligonucleotides. The polypeptide is Exodeoxyribonuclease 7 large subunit (Pseudomonas fluorescens (strain SBW25)).